A 218-amino-acid chain; its full sequence is Oxidoreductase claN (218 aa).

NADP(+)-binding residues include K38, D57, and N82. Catalysis depends on S134, which acts as the Proton donor. 3 residues coordinate NADP(+): Y148, K152, and T183. The active-site Proton acceptor is the Y148. Catalysis depends on K152, which acts as the Lowers pKa of active site Tyr.

This sequence belongs to the short-chain dehydrogenases/reductases (SDR) family.

It functions in the pathway pigment biosynthesis. Functionally, oxidoreductase; part of the gene cluster that mediates the biosynthesis of the bianthraquinone cladofulvin, a conidial pigment not required for virulence but that plays a role in fitness and resistance to environmental stresses including UV light and low-temperature stress. The pathway begins with the synthesis of atrochrysone thioester by the polyketide synthase (PKS) claG. The atrochrysone carboxyl ACP thioesterase claF then breaks the thioester bond and releases the atrochrysone carboxylic acid from claG. This compound is decarboxylated by claH to yield emodin, which is further converted to chrysophanol hydroquinone by the reductase claC and the dehydratase claB. The cytochrome P450 monooxygenase claM then catalyzes the dimerization of nataloe-emodin to cladofulvin. The chain is Oxidoreductase claN from Passalora fulva (Tomato leaf mold).